Reading from the N-terminus, the 125-residue chain is uncharacterized protein (125 aa).

The signal sequence occupies residues 1–21 (MIRNIIITISAILLLTSKGFA). The stretch at 54–102 (KPEIREEIQKYRVEIVNINKKKRELYDKLSKEAQNFLAKEQEYKQRLSS) forms a coiled coil. Residues 96 to 125 (YKQRLSSSSMATEDSKDNNTAKDNKDADKK) form a disordered region. Basic and acidic residues predominate over residues 108–125 (EDSKDNNTAKDNKDADKK).

This is an uncharacterized protein from Rickettsia bellii (strain RML369-C).